An 81-amino-acid polypeptide reads, in one-letter code: Acyl carrier protein (81 aa).

The Carrier domain occupies 3–78 (QEIFDKIKNI…EAVNIIAEKT (76 aa)). S38 carries the post-translational modification O-(pantetheine 4'-phosphoryl)serine.

It belongs to the acyl carrier protein (ACP) family. In terms of processing, 4'-phosphopantetheine is transferred from CoA to a specific serine of apo-ACP by AcpS. This modification is essential for activity because fatty acids are bound in thioester linkage to the sulfhydryl of the prosthetic group.

Its subcellular location is the cytoplasm. It functions in the pathway lipid metabolism; fatty acid biosynthesis. Its function is as follows. Carrier of the growing fatty acid chain in fatty acid biosynthesis. This Picosynechococcus sp. (strain ATCC 27264 / PCC 7002 / PR-6) (Agmenellum quadruplicatum) protein is Acyl carrier protein.